The chain runs to 260 residues: Rhythmically expressed gene 2 protein (260 aa).

This chain is Rhythmically expressed gene 2 protein (Reg-2), found in Drosophila melanogaster (Fruit fly).